A 258-amino-acid polypeptide reads, in one-letter code: Hydroxyacylglutathione hydrolase (258 aa).

Positions 56, 58, 60, 61, 112, 132, and 170 each coordinate Zn(2+).

The protein belongs to the metallo-beta-lactamase superfamily. Glyoxalase II family. Monomer. Requires Zn(2+) as cofactor.

The catalysed reaction is an S-(2-hydroxyacyl)glutathione + H2O = a 2-hydroxy carboxylate + glutathione + H(+). It functions in the pathway secondary metabolite metabolism; methylglyoxal degradation; (R)-lactate from methylglyoxal: step 2/2. Functionally, thiolesterase that catalyzes the hydrolysis of S-D-lactoyl-glutathione to form glutathione and D-lactic acid. This is Hydroxyacylglutathione hydrolase from Pseudomonas aeruginosa (strain LESB58).